A 72-amino-acid chain; its full sequence is Large ribosomal subunit protein bL28 (72 aa).

It belongs to the bacterial ribosomal protein bL28 family.

The protein is Large ribosomal subunit protein bL28 of Chlorobaculum parvum (strain DSM 263 / NCIMB 8327) (Chlorobium vibrioforme subsp. thiosulfatophilum).